Reading from the N-terminus, the 335-residue chain is Homeobox protein Hox-A1 (335 aa).

Residues 61-80 form a disordered region; that stretch reads IGSPHHHHHHHHRHPQPATY. The segment covering 64-75 has biased composition (basic residues); that stretch reads PHHHHHHHHRHP. The tract at residues 75 to 203 is interaction with OGT; that stretch reads PQPATYQTSG…PASETSSPAQ (129 aa). The short motif at 204–209 is the Antp-type hexapeptide element; the sequence is TFDWMK. The segment at residues 229-288 is a DNA-binding region (homeobox); sequence PNAVRTNFTTKQLTELEKEFHFNKYLTRARRVEIAASLQLNETQVKIWFQNRRMKQKKRE. Residues 281–335 are disordered; it reads RMKQKKREKEGLLPISPATPPGNDEKAEESSEKSSSSPCVPSPGSSTSDTLTTSH. Residues 303–312 show a composition bias toward basic and acidic residues; sequence NDEKAEESSE. Residues 313–328 are compositionally biased toward low complexity; the sequence is KSSSSPCVPSPGSSTS.

The protein belongs to the Antp homeobox family. Labial subfamily. As to quaternary structure, interacts with OGT (via TPR repeats domain); the interaction takes place mainly in the nucleus. Forms a DNA-binding heterodimer with transcription factor PBX1.

The protein localises to the nucleus. Sequence-specific transcription factor. Regulates multiple developmental processes including brainstem, inner and outer ear, abducens nerve and cardiovascular development and morphogenesis as well as cognition and behavior. Also part of a developmental regulatory system that provides cells with specific positional identities on the anterior-posterior axis. Acts on the anterior body structures. Seems to act in the maintenance and/or generation of hindbrain segments. Activates transcription in the presence of PBX1A and PKNOX1. This is Homeobox protein Hox-A1 (HOXA1) from Homo sapiens (Human).